The sequence spans 445 residues: Na(+)-translocating NADH-quinone reductase subunit A (445 aa).

The protein belongs to the NqrA family. In terms of assembly, composed of six subunits; NqrA, NqrB, NqrC, NqrD, NqrE and NqrF.

It carries out the reaction a ubiquinone + n Na(+)(in) + NADH + H(+) = a ubiquinol + n Na(+)(out) + NAD(+). In terms of biological role, NQR complex catalyzes the reduction of ubiquinone-1 to ubiquinol by two successive reactions, coupled with the transport of Na(+) ions from the cytoplasm to the periplasm. NqrA to NqrE are probably involved in the second step, the conversion of ubisemiquinone to ubiquinol. The polypeptide is Na(+)-translocating NADH-quinone reductase subunit A (Teredinibacter turnerae (strain ATCC 39867 / T7901)).